Reading from the N-terminus, the 164-residue chain is MTDTQVTWLTQESHDRLKAELDQLIANRPVIAAEINDRREEGDLRENGGYHAAREEQGQQEARIRQLQDLLNIAKVGEAPKQSGVALPGSVVKVYYNDDKSDTETFLIATRQEGVNEGKLEVYSPNSPLGGALIDAKVGETRSYTVPNGNTVQVTLISAEPYHS.

Residues 50 to 75 are a coiled coil; it reads YHAAREEQGQQEARIRQLQDLLNIAK.

This sequence belongs to the GreA/GreB family.

Necessary for efficient RNA polymerase transcription elongation past template-encoded arresting sites. The arresting sites in DNA have the property of trapping a certain fraction of elongating RNA polymerases that pass through, resulting in locked ternary complexes. Cleavage of the nascent transcript by cleavage factors such as GreA or GreB allows the resumption of elongation from the new 3'terminus. GreA releases sequences of 2 to 3 nucleotides. The polypeptide is Transcription elongation factor GreA (Mycobacterium leprae (strain Br4923)).